The sequence spans 281 residues: NADPH-dependent 7-cyano-7-deazaguanine reductase (281 aa).

Residue 87–89 participates in substrate binding; it reads IES. 89-90 serves as a coordination point for NADPH; sequence SK. The active-site Thioimide intermediate is the cysteine 188. Aspartate 195 serves as the catalytic Proton donor. 227–228 contributes to the substrate binding site; that stretch reads HE. NADPH is bound at residue 256 to 257; sequence RG. The disordered stretch occupies residues 261-281; the sequence is INPYRSTEQDKPAHNHRMARQ.

The protein belongs to the GTP cyclohydrolase I family. QueF type 2 subfamily. In terms of assembly, homodimer.

The protein resides in the cytoplasm. The enzyme catalyses 7-aminomethyl-7-carbaguanine + 2 NADP(+) = 7-cyano-7-deazaguanine + 2 NADPH + 3 H(+). It participates in tRNA modification; tRNA-queuosine biosynthesis. Catalyzes the NADPH-dependent reduction of 7-cyano-7-deazaguanine (preQ0) to 7-aminomethyl-7-deazaguanine (preQ1). This Vibrio parahaemolyticus serotype O3:K6 (strain RIMD 2210633) protein is NADPH-dependent 7-cyano-7-deazaguanine reductase.